Reading from the N-terminus, the 420-residue chain is Carbohydrate sulfotransferase 12 (420 aa).

At 1 to 5 (MAKSR) the chain is on the cytoplasmic side. The helical; Signal-anchor for type II membrane protein transmembrane segment at 6-26 (LFCLLVALGSVFMILFIIVYW) threads the bilayer. Topologically, residues 27–420 (DNVGTANLNL…YPKPDDLLSV (394 aa)) are lumenal. 2 N-linked (GlcNAc...) asparagine glycosylation sites follow: N76 and N139. 176-182 (PKVACTN) is a 3'-phosphoadenylyl sulfate binding site. The N-linked (GlcNAc...) asparagine glycan is linked to N215. A 3'-phosphoadenylyl sulfate-binding site is contributed by 251–259 (RDPFVRLIS). N286 and N376 each carry an N-linked (GlcNAc...) asparagine glycan.

This sequence belongs to the sulfotransferase 2 family.

Its subcellular location is the golgi apparatus membrane. The catalysed reaction is chondroitin beta-D-glucuronate + n 3'-phosphoadenylyl sulfate = chondroitin 4'-sulfate + n adenosine 3',5'-bisphosphate + n H(+). Functionally, catalyzes the transfer of sulfate to position 4 of the N-acetylgalactosamine (GalNAc) residue of chondroitin and desulfated dermatan sulfate. Chondroitin sulfate constitutes the predominant proteoglycan present in cartilage and is distributed on the surfaces of many cells and extracellular matrices. The sequence is that of Carbohydrate sulfotransferase 12 (chst12) from Xenopus laevis (African clawed frog).